Consider the following 209-residue polypeptide: Protein GrpE (209 aa).

Over residues 1–13 (MSNDSSKAKQNQV) the composition is skewed to polar residues. The disordered stretch occupies residues 1-27 (MSNDSSKAKQNQVDEAVEGEIITDNEN). Residues 15 to 27 (EAVEGEIITDNEN) show a composition bias toward acidic residues.

The protein belongs to the GrpE family. Homodimer.

Its subcellular location is the cytoplasm. Functionally, participates actively in the response to hyperosmotic and heat shock by preventing the aggregation of stress-denatured proteins, in association with DnaK and GrpE. It is the nucleotide exchange factor for DnaK and may function as a thermosensor. Unfolded proteins bind initially to DnaJ; upon interaction with the DnaJ-bound protein, DnaK hydrolyzes its bound ATP, resulting in the formation of a stable complex. GrpE releases ADP from DnaK; ATP binding to DnaK triggers the release of the substrate protein, thus completing the reaction cycle. Several rounds of ATP-dependent interactions between DnaJ, DnaK and GrpE are required for fully efficient folding. This Shewanella sediminis (strain HAW-EB3) protein is Protein GrpE.